The following is a 299-amino-acid chain: GTPase Era (299 aa).

The Era-type G domain occupies 4 to 171 (KSGFVAILGR…VDILSENLDE (168 aa)). Residues 12–19 (GRPNVGKS) form a G1 region. 12–19 (GRPNVGKS) serves as a coordination point for GTP. The interval 38–42 (XTTRN) is G2. The interval 59–62 (DTPG) is G3. Residues 59 to 63 (DTPGI) and 121 to 124 (NKID) contribute to the GTP site. Residues 121–124 (NKID) are G4. The interval 150 to 152 (ISA) is G5. Positions 202–280 (TREEIPHSVA…FLETWVKVKK (79 aa)) constitute a KH type-2 domain.

The protein belongs to the TRAFAC class TrmE-Era-EngA-EngB-Septin-like GTPase superfamily. Era GTPase family. Monomer.

The protein resides in the cytoplasm. It localises to the cell membrane. Its function is as follows. An essential GTPase that binds both GDP and GTP, with rapid nucleotide exchange. Plays a role in 16S rRNA processing and 30S ribosomal subunit biogenesis and possibly also in cell cycle regulation and energy metabolism. This is GTPase Era from Streptococcus pneumoniae serotype 19F (strain G54).